The following is a 328-amino-acid chain: Tryptophan--tRNA ligase (328 aa).

Residues 10 to 12 (QAT) and 18 to 19 (GN) each bind ATP. Residues 11 to 19 (ATGSLHLGN) carry the 'HIGH' region motif. D134 lines the L-tryptophan pocket. ATP contacts are provided by residues 146–148 (GED), I186, and 195–199 (KMSKS). The 'KMSKS' region signature appears at 195-199 (KMSKS).

The protein belongs to the class-I aminoacyl-tRNA synthetase family. Homodimer.

It is found in the cytoplasm. The enzyme catalyses tRNA(Trp) + L-tryptophan + ATP = L-tryptophyl-tRNA(Trp) + AMP + diphosphate + H(+). Its function is as follows. Catalyzes the attachment of tryptophan to tRNA(Trp). In Rickettsia bellii (strain RML369-C), this protein is Tryptophan--tRNA ligase.